We begin with the raw amino-acid sequence, 160 residues long: Protein-export protein SecB (160 aa).

Belongs to the SecB family. Homotetramer, a dimer of dimers. One homotetramer interacts with 1 SecA dimer.

The protein resides in the cytoplasm. Its function is as follows. One of the proteins required for the normal export of preproteins out of the cell cytoplasm. It is a molecular chaperone that binds to a subset of precursor proteins, maintaining them in a translocation-competent state. It also specifically binds to its receptor SecA. The polypeptide is Protein-export protein SecB (Rhizobium etli (strain ATCC 51251 / DSM 11541 / JCM 21823 / NBRC 15573 / CFN 42)).